A 230-amino-acid polypeptide reads, in one-letter code: Ureidoacrylate amidohydrolase RutB (230 aa).

The Proton acceptor role is filled by Asp-24. The active site involves Lys-133. Residue Cys-166 is the Nucleophile of the active site.

Belongs to the isochorismatase family. RutB subfamily.

The catalysed reaction is (Z)-3-ureidoacrylate + H2O + H(+) = (Z)-3-aminoacrylate + NH4(+) + CO2. It catalyses the reaction (Z)-3-ureidoacrylate + H2O = (Z)-3-aminoacrylate + carbamate + H(+). It carries out the reaction (Z)-2-methylureidoacrylate + H2O + H(+) = (Z)-2-methylaminoacrylate + NH4(+) + CO2. Its function is as follows. Hydrolyzes ureidoacrylate to form aminoacrylate and carbamate. The carbamate hydrolyzes spontaneously, thereby releasing one of the nitrogen atoms of the pyrimidine ring as ammonia and one of its carbon atoms as CO2. In Escherichia coli O6:K15:H31 (strain 536 / UPEC), this protein is Ureidoacrylate amidohydrolase RutB.